We begin with the raw amino-acid sequence, 68 residues long: Conotoxin TsMMSK-021 (68 aa).

The first 20 residues, 1–20, serve as a signal peptide directing secretion; the sequence is MMSKLGVLLTICLLLFPLTA. Residues 21–50 constitute a propeptide that is removed on maturation; it reads VPLDGDQHADRPADRMQDISSEQHPLFDPV. 3 disulfides stabilise this stretch: cysteine 53/cysteine 66, cysteine 54/cysteine 62, and cysteine 58/cysteine 65. Proline 64 bears the 4-hydroxyproline mark.

This sequence belongs to the conotoxin M superfamily. In terms of tissue distribution, expressed by the venom duct.

It is found in the secreted. The protein is Conotoxin TsMMSK-021 of Conus tessulatus (Tessellate cone).